Consider the following 638-residue polypeptide: 1-deoxy-D-xylulose-5-phosphate synthase (638 aa).

Thiamine diphosphate contacts are provided by residues histidine 79 and alanine 120–serine 122. Position 151 (aspartate 151) interacts with Mg(2+). Thiamine diphosphate-binding positions include glycine 152–alanine 153, asparagine 180, tyrosine 289, and glutamate 371. Asparagine 180 lines the Mg(2+) pocket.

Belongs to the transketolase family. DXPS subfamily. In terms of assembly, homodimer. It depends on Mg(2+) as a cofactor. Requires thiamine diphosphate as cofactor.

It catalyses the reaction D-glyceraldehyde 3-phosphate + pyruvate + H(+) = 1-deoxy-D-xylulose 5-phosphate + CO2. Its pathway is metabolic intermediate biosynthesis; 1-deoxy-D-xylulose 5-phosphate biosynthesis; 1-deoxy-D-xylulose 5-phosphate from D-glyceraldehyde 3-phosphate and pyruvate: step 1/1. In terms of biological role, catalyzes the acyloin condensation reaction between C atoms 2 and 3 of pyruvate and glyceraldehyde 3-phosphate to yield 1-deoxy-D-xylulose-5-phosphate (DXP). The sequence is that of 1-deoxy-D-xylulose-5-phosphate synthase from Rhizobium etli (strain ATCC 51251 / DSM 11541 / JCM 21823 / NBRC 15573 / CFN 42).